A 341-amino-acid chain; its full sequence is Methionine import ATP-binding protein MetN 2 (341 aa).

One can recognise an ABC transporter domain in the interval 2–241 (IELKEVVKEY…PQHTVTKRFV (240 aa)). 38–45 (GFSGAGKS) lines the ATP pocket.

The protein belongs to the ABC transporter superfamily. Methionine importer (TC 3.A.1.24) family. In terms of assembly, the complex is composed of two ATP-binding proteins (MetN), two transmembrane proteins (MetI) and a solute-binding protein (MetQ).

It localises to the cell membrane. The catalysed reaction is L-methionine(out) + ATP + H2O = L-methionine(in) + ADP + phosphate + H(+). The enzyme catalyses D-methionine(out) + ATP + H2O = D-methionine(in) + ADP + phosphate + H(+). Part of the ABC transporter complex MetNIQ involved in methionine import. Responsible for energy coupling to the transport system. The polypeptide is Methionine import ATP-binding protein MetN 2 (Staphylococcus aureus (strain USA300)).